Here is a 216-residue protein sequence, read N- to C-terminus: Superoxide dismutase [Cu-Zn] 2, chloroplastic (216 aa).

The N-terminal 62 residues, 1–62 (MAATNTILAF…APSKALTVVS (62 aa)), are a transit peptide targeting the chloroplast. Positions 108, 110, and 125 each coordinate Cu cation. Cysteine 119 and cysteine 208 form a disulfide bridge. Residues histidine 125, histidine 133, histidine 142, and aspartate 145 each coordinate Zn(2+). Histidine 182 lines the Cu cation pocket.

It belongs to the Cu-Zn superoxide dismutase family. In terms of assembly, homotetramer. Requires Cu cation as cofactor. The cofactor is Zn(2+). As to expression, expressed in leaves (at protein level). The spatial localization is regulated by miR398-mediated silencing. Mostly present in flowers, old rosette leaves and inflorescence, and, to a lower extent, in cauline leaves, stems and roots.

The protein resides in the plastid. The protein localises to the chloroplast. It carries out the reaction 2 superoxide + 2 H(+) = H2O2 + O2. Its function is as follows. Destroys radicals which are normally produced within the cells and which are toxic to biological systems. Mediates tolerance to stress, including photo-oxidative stress. This Arabidopsis thaliana (Mouse-ear cress) protein is Superoxide dismutase [Cu-Zn] 2, chloroplastic (CSD2).